The chain runs to 343 residues: Probable dual-specificity RNA methyltransferase RlmN (343 aa).

Glu-91 (proton acceptor) is an active-site residue. The Radical SAM core domain occupies 97–326 (HPGRITACIS…AEIRQEKGSD (230 aa)). A disulfide bridge connects residues Cys-104 and Cys-331. Positions 111, 115, and 118 each coordinate [4Fe-4S] cluster. S-adenosyl-L-methionine-binding positions include 158 to 159 (GE), Ser-190, 213 to 215 (SLH), and Asn-289. The active-site S-methylcysteine intermediate is Cys-331.

Belongs to the radical SAM superfamily. RlmN family. It depends on [4Fe-4S] cluster as a cofactor.

It is found in the cytoplasm. The enzyme catalyses adenosine(2503) in 23S rRNA + 2 reduced [2Fe-2S]-[ferredoxin] + 2 S-adenosyl-L-methionine = 2-methyladenosine(2503) in 23S rRNA + 5'-deoxyadenosine + L-methionine + 2 oxidized [2Fe-2S]-[ferredoxin] + S-adenosyl-L-homocysteine. The catalysed reaction is adenosine(37) in tRNA + 2 reduced [2Fe-2S]-[ferredoxin] + 2 S-adenosyl-L-methionine = 2-methyladenosine(37) in tRNA + 5'-deoxyadenosine + L-methionine + 2 oxidized [2Fe-2S]-[ferredoxin] + S-adenosyl-L-homocysteine. Functionally, specifically methylates position 2 of adenine 2503 in 23S rRNA and position 2 of adenine 37 in tRNAs. The polypeptide is Probable dual-specificity RNA methyltransferase RlmN (Thermotoga neapolitana (strain ATCC 49049 / DSM 4359 / NBRC 107923 / NS-E)).